The sequence spans 448 residues: tRNA modification GTPase MnmE (448 aa).

(6S)-5-formyl-5,6,7,8-tetrahydrofolate-binding residues include R24, E81, and K120. A TrmE-type G domain is found at 216 to 373; it reads GLNVVLVGAP…LKRTLLREAG (158 aa). N226 contacts K(+). Residues 226-231, 245-251, and 270-273 contribute to the GTP site; these read NVGKSS, TDIAGTT, and DTAG. Residue S230 coordinates Mg(2+). K(+) is bound by residues T245, I247, and T250. T251 is a Mg(2+) binding site. K448 is a (6S)-5-formyl-5,6,7,8-tetrahydrofolate binding site.

It belongs to the TRAFAC class TrmE-Era-EngA-EngB-Septin-like GTPase superfamily. TrmE GTPase family. Homodimer. Heterotetramer of two MnmE and two MnmG subunits. K(+) serves as cofactor.

The protein resides in the cytoplasm. Its function is as follows. Exhibits a very high intrinsic GTPase hydrolysis rate. Involved in the addition of a carboxymethylaminomethyl (cmnm) group at the wobble position (U34) of certain tRNAs, forming tRNA-cmnm(5)s(2)U34. This is tRNA modification GTPase MnmE from Neisseria meningitidis serogroup C / serotype 2a (strain ATCC 700532 / DSM 15464 / FAM18).